The chain runs to 2061 residues: Putative PWWP domain-containing DNA repair factor 4 (2061 aa).

Disordered regions lie at residues 101–211 (TNLG…SRAR), 382–408 (ALGR…RSSV), 541–586 (TPGT…GDGS), 668–694 (PATL…GDGS), 864–910 (PTPG…SERS), 1046–1072 (PGTM…GDRS), 1159–1182 (ALHG…RGDS), 1205–1383 (KAIA…RDDK), 1521–1548 (PGAL…DSSP), and 1602–1726 (KKGK…KLAN). 2 stretches are compositionally biased toward basic and acidic residues: residues 133-153 (PRED…KREN) and 162-173 (ESKRALRDDRSQ). Polar residues predominate over residues 397 to 408 (TPGTLQGNRSSV). Polar residues predominate over residues 1051–1061 (GDSSTARTATA). Residues 1364-1373 (DSSQVHTTIA) show a composition bias toward polar residues. Over residues 1639-1648 (LKEETQDSRP) the composition is skewed to basic and acidic residues. Residues 1656 to 1665 (PESSPFSGNI) show a composition bias toward polar residues. One can recognise a PWWP domain in the interval 1756 to 1817 (RGTMVWFKFQ…KHLDCKEKEK (62 aa)).

Belongs to the PWWP3A family.

This chain is Putative PWWP domain-containing DNA repair factor 4, found in Homo sapiens (Human).